Reading from the N-terminus, the 213-residue chain is Calcineurin B-like protein 8 (213 aa).

Gly-2 carries the N-myristoyl glycine lipid modification. 4 consecutive EF-hand domains span residues 31-66 (EVEA…RNSN), 67-102 (KKNL…FHPE), 104-139 (PLGD…LLNE), and 148-183 (AVEQ…NPAL). Ca(2+) contacts are provided by Asp-161, Asn-163, Asp-165, Lys-167, and Glu-172.

The protein belongs to the calcineurin regulatory subunit family. In terms of assembly, homodimer. As to expression, expressed at low levels in roots, shoots, culms, leaves and young spikelets.

Its subcellular location is the cell membrane. Its function is as follows. Acts as a calcium sensor. May function as positive regulator of salt stress responses. CBL proteins interact with CIPK serine-threonine protein kinases. Binding of a CBL protein to the regulatory NAF domain of a CIPK protein lead to the activation of the kinase in a calcium-dependent manner. In Oryza sativa subsp. japonica (Rice), this protein is Calcineurin B-like protein 8 (CBL8).